An 810-amino-acid polypeptide reads, in one-letter code: Hemoglobin-haptoglobin utilization protein B (810 aa).

Positions 1–22 (MPIPFKPVLAVAAIAQAFPAFA) are cleaved as a signal peptide. A TBDR plug domain is found at 34-166 (NEITVTGTHK…LGGAVNYQTK (133 aa)). A TBDR beta-barrel domain is found at 175-810 (DKPYHLGIKG…SYNFTIEAKF (636 aa)). Residues 793–810 (QRFTSPGRSYNFTIEAKF) carry the TonB C-terminal box motif.

This sequence belongs to the TonB-dependent receptor family.

Its subcellular location is the cell outer membrane. Acts as a receptor for hemoglobin or the hemoglobin/haptoglobin complex and is required for heme uptake. This chain is Hemoglobin-haptoglobin utilization protein B (hpuB), found in Neisseria meningitidis serogroup C.